The chain runs to 67 residues: Large ribosomal subunit protein bL31 (67 aa).

Cysteine 16, cysteine 18, cysteine 36, and cysteine 39 together coordinate Zn(2+).

It belongs to the bacterial ribosomal protein bL31 family. Type A subfamily. In terms of assembly, part of the 50S ribosomal subunit. Zn(2+) is required as a cofactor.

Functionally, binds the 23S rRNA. The sequence is that of Large ribosomal subunit protein bL31 from Syntrophomonas wolfei subsp. wolfei (strain DSM 2245B / Goettingen).